The following is a 261-amino-acid chain: Kallikrein-2 (261 aa).

Positions methionine 1–valine 18 are cleaved as a signal peptide. A propeptide spans proline 19 to arginine 24 (activation peptide). The 234-residue stretch at isoleucine 25–alanine 258 folds into the Peptidase S1 domain. Cystine bridges form between cysteine 31/cysteine 173, cysteine 50/cysteine 66, cysteine 152/cysteine 219, cysteine 184/cysteine 198, and cysteine 209/cysteine 234. Histidine 65 (charge relay system) is an active-site residue. The N-linked (GlcNAc...) asparagine glycan is linked to asparagine 102. The Charge relay system role is filled by aspartate 120. Serine 213 serves as the catalytic Charge relay system.

This sequence belongs to the peptidase S1 family. Kallikrein subfamily.

It carries out the reaction Preferential cleavage of Arg-|-Xaa bonds in small molecule substrates. Highly selective action to release kallidin (lysyl-bradykinin) from kininogen involves hydrolysis of Met-|-Xaa or Leu-|-Xaa.. Its function is as follows. Glandular kallikreins cleave Met-Lys and Arg-Ser bonds in kininogen to release Lys-bradykinin. In Homo sapiens (Human), this protein is Kallikrein-2 (KLK2).